The primary structure comprises 140 residues: Nucleoside diphosphate kinase (140 aa).

ATP-binding residues include Lys-11, Phe-59, Arg-87, Thr-93, Arg-104, and Asn-114. His-117 serves as the catalytic Pros-phosphohistidine intermediate.

Belongs to the NDK family. Homotetramer. Requires Mg(2+) as cofactor.

The protein localises to the cytoplasm. The catalysed reaction is a 2'-deoxyribonucleoside 5'-diphosphate + ATP = a 2'-deoxyribonucleoside 5'-triphosphate + ADP. The enzyme catalyses a ribonucleoside 5'-diphosphate + ATP = a ribonucleoside 5'-triphosphate + ADP. Functionally, major role in the synthesis of nucleoside triphosphates other than ATP. The ATP gamma phosphate is transferred to the NDP beta phosphate via a ping-pong mechanism, using a phosphorylated active-site intermediate. This is Nucleoside diphosphate kinase from Rickettsia canadensis (strain McKiel).